Here is a 260-residue protein sequence, read N- to C-terminus: MNPFDSQSEDASDAIGRSLGRRPLARKKLSEMVEEELEQMIRRREFAEGEPLPSERELMAFFNVGRPSVREALAALKRKGLVQISNGERARVSRPSADTIISELSGMAKDFLSHPGGIAHFEQLRLFFESSLVRYAAEKATDEQLERLTKALDINRQSLADNAQFIRSDVEFHRVLAEIPGNPIFMAIHVALLDWLIAARPAVPDAELIEHNNISYQQHIAIVDAIRKRDPDEADRALQTHLNSVFATWQALSQKKKSRK.

Positions 1–20 (MNPFDSQSEDASDAIGRSLG) are disordered. Residues 27–95 (KKLSEMVEEE…NGERARVSRP (69 aa)) enclose the HTH gntR-type domain. Residues 55 to 74 (ERELMAFFNVGRPSVREALA) constitute a DNA-binding region (H-T-H motif).

It belongs to the NanR family.

Its function is as follows. Transcriptional repressor that controls expression of the genes required for the catabolism of sialic acids. This Cronobacter sakazakii (strain ATCC BAA-894) (Enterobacter sakazakii) protein is HTH-type transcriptional repressor NanR.